Reading from the N-terminus, the 404-residue chain is Inosine-5'-monophosphate dehydrogenase (404 aa).

Residues aspartate 172 and 222 to 224 (GIG) each bind NAD(+). K(+)-binding residues include glycine 224 and glycine 226. Serine 227 is an IMP binding site. Residue cysteine 229 participates in K(+) binding. The active-site Thioimidate intermediate is cysteine 229. IMP is bound by residues 262–264 (DGG), 285–286 (GN), and 309–313 (YVGMG). Catalysis depends on arginine 325, which acts as the Proton acceptor. Glutamate 340 lines the IMP pocket. The K(+) site is built by glutamate 394, serine 395, and histidine 396.

Belongs to the IMPDH/GMPR family. In terms of assembly, homotetramer. The cofactor is K(+).

The catalysed reaction is IMP + NAD(+) + H2O = XMP + NADH + H(+). It functions in the pathway purine metabolism; XMP biosynthesis via de novo pathway; XMP from IMP: step 1/1. With respect to regulation, mycophenolic acid (MPA) is a non-competitive inhibitor that prevents formation of the closed enzyme conformation by binding to the same site as the amobile flap. In contrast, mizoribine monophosphate (MZP) is a competitive inhibitor that induces the closed conformation. MPA is a potent inhibitor of mammalian IMPDHs but a poor inhibitor of the bacterial enzymes. MZP is a more potent inhibitor of bacterial IMPDH. In terms of biological role, catalyzes the conversion of inosine 5'-phosphate (IMP) to xanthosine 5'-phosphate (XMP), the first committed and rate-limiting step in the de novo synthesis of guanine nucleotides, and therefore plays an important role in the regulation of cell growth. Essential for mouse infection by tick bite and critical for the survival in environments that appear to lack sufficient amounts of guanine, guanosine, and/or deoxyguanosine to support spirochete growth, such as mammalian host tissues. This Borreliella burgdorferi (strain ATCC 35210 / DSM 4680 / CIP 102532 / B31) (Borrelia burgdorferi) protein is Inosine-5'-monophosphate dehydrogenase.